The chain runs to 363 residues: Trichothecene biosynthesis protein 14 (363 aa).

The protein belongs to the TRI14 family.

Part of the gene cluster that mediates the production of the antimicrobial trichothecene harzianum A (HA) that plays a role in Botrytis cinerea antagonistic activity and plant defense priming. The biosynthesis of harzianum A begins with the cyclization of farnesyl diphosphate to trichodiene and is catalyzed by the trichodiene synthase TRI5. Trichodiene undergoes a series of oxygenations catalyzed by the cytochrome P450 monooxygenase TRI4. TRI4 controls the addition of 3 oxygens at C-2, C-11, and the C-12, C-13-epoxide to form the intermediate isotrichodiol. Isotrichodiol then undergoes a non-enzymatic isomerization and cyclization to form 12,13-epoxytrichothec-9-ene (EPT) which is further converted to trichodermol by the cytochrome P450 monooxygenase TRI11 via C-4 hydroxylation. The last step of HA synthesis is esterification of an octatriendioyl moiety to the C-4 oxygen of trichodermol. The octatriendioyl moiety is probably produced by the polyketide synthase TRI17 and the esterification performed by the trichothecene O-acetyltransferase TRI3. The polypeptide is Trichothecene biosynthesis protein 14 (Trichoderma arundinaceum).